A 55-amino-acid polypeptide reads, in one-letter code: Myrmicitoxin(1)-Pr6b (55 aa).

An N-terminal signal peptide occupies residues 1 to 22 (MKIIYAFLLIAVVAFMGSGIMA). Positions 23–29 (ESLAEAI) are excised as a propeptide.

Belongs to the formicidae venom clade 4 family. As to expression, expressed by the venom gland.

The protein resides in the secreted. Functionally, probable neurotoxin. The sequence is that of Myrmicitoxin(1)-Pr6b from Pogonomyrmex rugosus (Desert harvester ant).